The sequence spans 257 residues: MLSPCPILPSAECRDTADTPADPPGRVIPINRRRRRPGDWRPERPRERLLERGPAALTDDELIALLLGTGKPGHDVFVTARALVDQFGTLHGLLEATADDFEAHPGIGPARSARLVAVTEIARRMLVEKAEERMQIDSPGAVEDCLRLKIGTRQYEVFIAVYLDARNRLIDMEEIARGSLTRMAVYPREIVRRAMKHNAAALIVAHNHPSGAVQPSAEDRRLTRVLKDALELVDVRLLDHVVVGVSDTFSFARAGWL.

The disordered stretch occupies residues 1–53 (MLSPCPILPSAECRDTADTPADPPGRVIPINRRRRRPGDWRPERPRERLLERG). A compositionally biased stretch (basic and acidic residues) spans 37–51 (PGDWRPERPRERLLE). Residues 135 to 257 (QIDSPGAVED…TFSFARAGWL (123 aa)) form the MPN domain. Zn(2+) is bound by residues His-206, His-208, and Asp-219. Residues 206–219 (HNHPSGAVQPSAED) carry the JAMM motif motif.

This sequence belongs to the UPF0758 family.

The protein is UPF0758 protein Bcenmc03_2526 of Burkholderia orbicola (strain MC0-3).